We begin with the raw amino-acid sequence, 236 residues long: 7-cyano-7-deazaguanine synthase (236 aa).

Position 13 to 23 (13 to 23 (FSGGQDSTVCL)) interacts with ATP. 4 residues coordinate Zn(2+): cysteine 200, cysteine 215, cysteine 218, and cysteine 221.

Belongs to the QueC family. Zn(2+) serves as cofactor.

It catalyses the reaction 7-carboxy-7-deazaguanine + NH4(+) + ATP = 7-cyano-7-deazaguanine + ADP + phosphate + H2O + H(+). Its pathway is purine metabolism; 7-cyano-7-deazaguanine biosynthesis. Functionally, catalyzes the ATP-dependent conversion of 7-carboxy-7-deazaguanine (CDG) to 7-cyano-7-deazaguanine (preQ(0)). This is 7-cyano-7-deazaguanine synthase from Parvibaculum lavamentivorans (strain DS-1 / DSM 13023 / NCIMB 13966).